Here is a 921-residue protein sequence, read N- to C-terminus: MDKTYSPEAIEKALYKKWESHHYFQPRGEGKRFCIMLPPPNVTGSLHMGHGFQHTIMDALTRYHRMLGDKTLWQPGTDHAGISTQLVVERQLEAQGVSRKELTREQFLDKVWQWKEESGNTITQQMRRLGASVDWSRERFTMDEGLSAAVQKVFVQLYEEGLIYRGTRLVNWDPKLGTAVSDLEVLSEEEDGFLWHIRYPVVDSEEFLIVATTRPETLLGDCAVAVHPDDSRFRHLIGKQVHLPLCDRTIPVIADDYVDKEFGSGCVKITPAHDFNDHEVGKRHQLPQINILTKKGTINKNAPLKYQGMDRFLAREQIIKDLEQEGLLAKTEPHKLKVPRGEKSNVIIEPLLTDQWYVKTKPLAEPAIAAVKKGDIRFIPETWDKTYFQWMDNIEDWCISRQLWWGHRIPAWYDNHGNIYVGYSENDVRFKHKIDQSTPLKQDEDVLDTWFSSALWPFSTLGWPERTPELEQFYPTSVLVTGFDIIFFWVARMIMMGLKFTGKIPFKEVFITGLIRDSEGHKMSKSKGNVLDPLDIVDGIELDSLIAKRTSNLMLNSVRDRITKATRKEFPEGISAYGTDALRFTYCSLASTGRNVRFDLGRVEGYRNFCNKLWNAARYVLLNTDEEQIDFGDGAFQYSPADQWILSRLQNTVSKVHHYFETYRFDLLANTLYEFVWHEYCDWYLELSKPILQDDQALSAMKRGTRRTLIHVLDQILKLLHPLMPFITEEIWQKTTKFTSENGISIMLSTYPKVNEEFINPSIEEELDWLKSAIQSLRTIRSEMSISPAKLIPLYIRNITPELKERIAKYEKILKTLSKIDKINYLAPDEKVPVSATAVLGEIELLIPMADLIDKEAELSRLNKELAKLNKDIELAQGKLNNPKFTDKAPEEIIAKEKDKLAQAQLAKDKLLQHKNRIESL.

The 'HIGH' region signature appears at 40-50 (PNVTGSLHMGH). Residues 522–526 (KMSKS) carry the 'KMSKS' region motif. Lys-525 contacts ATP. The stretch at 849-921 (MADLIDKEAE…LQHKNRIESL (73 aa)) forms a coiled coil.

Belongs to the class-I aminoacyl-tRNA synthetase family. ValS type 1 subfamily. Monomer.

It localises to the cytoplasm. The catalysed reaction is tRNA(Val) + L-valine + ATP = L-valyl-tRNA(Val) + AMP + diphosphate. In terms of biological role, catalyzes the attachment of valine to tRNA(Val). As ValRS can inadvertently accommodate and process structurally similar amino acids such as threonine, to avoid such errors, it has a 'posttransfer' editing activity that hydrolyzes mischarged Thr-tRNA(Val) in a tRNA-dependent manner. This Legionella pneumophila (strain Lens) protein is Valine--tRNA ligase.